Here is a 214-residue protein sequence, read N- to C-terminus: Pyridoxine/pyridoxamine 5'-phosphate oxidase (214 aa).

Substrate contacts are provided by residues 9 to 12 and lysine 67; that span reads RKDY. FMN contacts are provided by residues 62–67, 77–78, arginine 83, lysine 84, and glutamine 106; these read RMVLLK and FT. Tyrosine 124, arginine 128, and serine 132 together coordinate substrate. FMN-binding positions include 141–142 and tryptophan 186; that span reads QS. 192–194 is a substrate binding site; it reads RLH. Arginine 196 is a binding site for FMN.

Belongs to the pyridoxamine 5'-phosphate oxidase family. As to quaternary structure, homodimer. FMN is required as a cofactor.

The enzyme catalyses pyridoxamine 5'-phosphate + O2 + H2O = pyridoxal 5'-phosphate + H2O2 + NH4(+). It carries out the reaction pyridoxine 5'-phosphate + O2 = pyridoxal 5'-phosphate + H2O2. The protein operates within cofactor metabolism; pyridoxal 5'-phosphate salvage; pyridoxal 5'-phosphate from pyridoxamine 5'-phosphate: step 1/1. It functions in the pathway cofactor metabolism; pyridoxal 5'-phosphate salvage; pyridoxal 5'-phosphate from pyridoxine 5'-phosphate: step 1/1. Functionally, catalyzes the oxidation of either pyridoxine 5'-phosphate (PNP) or pyridoxamine 5'-phosphate (PMP) into pyridoxal 5'-phosphate (PLP). The protein is Pyridoxine/pyridoxamine 5'-phosphate oxidase of Nostoc punctiforme (strain ATCC 29133 / PCC 73102).